Here is a 301-residue protein sequence, read N- to C-terminus: MDLSELERDNTGRCRLSSPVPAVCLKEPCVLGVDEAGRGPVLGPMVYAICYCPLSRLADLEALKVADSKTLTENERERLFAKMEEDGDFVGWALDILSPNLISTSMLGRVKYNLNSMSHDTAAGLIQHAMDQNVKVTQVFVDTVGMPETYQARLQQRFPGIEVTVKAKADSLFPVVSAASIIAKVARDQAVKNWQFVESLQGLDSDYGSGYPNDPKTKAWLRKHVDPVFGFPQFVRFSWSTAQAILEKEAESVTWEDSAAEEDPEGPGRITSYFSQGPQACRPQVSHKYFQERGLETATSL.

At Met-1 the chain carries N-acetylmethionine. Positions 28 to 251 (PCVLGVDEAG…AQAILEKEAE (224 aa)) constitute an RNase H type-2 domain. A divalent metal cation-binding residues include Asp-34, Glu-35, and Asp-142. Thr-217 bears the Phosphothreonine mark. Ser-258 bears the Phosphoserine mark.

This sequence belongs to the RNase HII family. Eukaryotic subfamily. The RNase H2 complex is a heterotrimer composed of the catalytic subunit RNASEH2A and the non-catalytic subunits RNASEH2B and RNASEH2C. Requires Mn(2+) as cofactor. Mg(2+) serves as cofactor.

It is found in the nucleus. It catalyses the reaction Endonucleolytic cleavage to 5'-phosphomonoester.. Catalytic subunit of RNase HII, an endonuclease that specifically degrades the RNA of RNA:DNA hybrids. Participates in DNA replication, possibly by mediating the removal of lagging-strand Okazaki fragment RNA primers during DNA replication. Mediates the excision of single ribonucleotides from DNA:RNA duplexes. The sequence is that of Ribonuclease H2 subunit A (Rnaseh2a) from Rattus norvegicus (Rat).